The primary structure comprises 303 residues: MSIRSLGYMGFAVSDVAAWRSFLTQKLGLMEAGTTDNGDLFRIDSRAWRIAVQQGEVDDLAFAGYEVADAAGLAQMADKLKQAGIAVTTGDASLARRRGVTGLITFADPFGLPLEIYYGASEVFEKPFLPGAAVSGFLTGEQGLGHFVRCVPDSDKALAFYTDVLGFQLSDVIDMKMGPDVTVPVYFLHCNERHHTLAIAAFPLPKRIHHFMLEVASLDDVGFAFDRVDADGLITSTLGRHTNDHMVSFYASTPSGVEVEYGWSARTVDRSWVVVRHDSPSMWGHKSVRDKALRATKHEQQPE.

VOC domains are found at residues 5-119 (SLGY…IYYG) and 143-264 (GLGH…YGWS). Positions 146, 210, and 260 each coordinate Fe cation. Positions 283-303 (WGHKSVRDKALRATKHEQQPE) are disordered. The span at 287-303 (SVRDKALRATKHEQQPE) shows a compositional bias: basic and acidic residues.

It belongs to the extradiol ring-cleavage dioxygenase family. As to quaternary structure, homooctamer. Fe(2+) is required as a cofactor.

It carries out the reaction biphenyl-2,3-diol + O2 = 2-hydroxy-6-oxo-6-phenylhexa-2,4-dienoate + H(+). Its pathway is xenobiotic degradation; biphenyl degradation; 2-hydroxy-2,4-pentadienoate and benzoate from biphenyl: step 3/4. This chain is Biphenyl-2,3-diol 1,2-dioxygenase (bphC), found in Metapseudomonas furukawaii (Pseudomonas furukawaii).